The following is a 270-amino-acid chain: Myeloid leukemia factor 1 (270 aa).

4 positions are modified to phosphoserine: Ser-6, Ser-8, Ser-32, and Ser-34. The segment at 50 to 125 is interaction with COPS3; that stretch reads RARNRMGHED…VGDEPPKVFQ (76 aa). Disordered stretches follow at residues 127 to 148 and 221 to 247; these read STQTRRAPGGIKETRKALRDSD and RSVAHENSGSRELKRREKHHQSPAIEH. Basic and acidic residues predominate over residues 138-148; the sequence is KETRKALRDSD.

It belongs to the MLF family. In terms of assembly, interacts with CENPU. Also interacts with NRBP1/MADM, YWHAZ/14-3-3-zeta and HNRPUL2/MANP. NRBP1 recruits a serine kinase which phosphorylates both itself and MLF1. Phosphorylated MLF1 then binds to YWHAZ and is retained in the cytoplasm. Retained in the nucleus by binding to HNRPUL2. Binds to COPS3/CSN3 which is required for suppression of COP1 and activation of p53. Post-translationally, phosphorylation is required for binding to YWHAZ.

The protein localises to the cytoplasm. The protein resides in the nucleus. It localises to the cell projection. Its subcellular location is the cilium. It is found in the cytoskeleton. The protein localises to the cilium basal body. Its function is as follows. Involved in lineage commitment of primary hemopoietic progenitors by restricting erythroid formation and enhancing myeloid formation. Interferes with erythropoietin-induced erythroid terminal differentiation by preventing cells from exiting the cell cycle through suppression of CDKN1B/p27Kip1 levels. Suppresses COP1 activity via CSN3 which activates p53 and induces cell cycle arrest. Binds DNA and affects the expression of a number of genes so may function as a transcription factor in the nucleus. The chain is Myeloid leukemia factor 1 (MLF1) from Bos taurus (Bovine).